We begin with the raw amino-acid sequence, 115 residues long: Secapin (115 aa).

The N-terminal stretch at 1–24 is a signal peptide; that stretch reads MRFQVYILHLCFFILVVLTYLSQG. A propeptide spanning residues 25 to 90 is cleaved from the precursor; that stretch reads QSYTTTTTTS…STENFDITNR (66 aa). Residues Cys-99 and Cys-110 are joined by a disulfide bond.

Belongs to the secapin family. Expressed in the epidermis, fat body and venom gland.

It localises to the secreted. Serine protease inhibitor which exhibits antifibrinolytic, antielastolytic and antimicrobial activities. Displays antimicrobial activity against bacteria and fungi. Likely functions in the innate immune response to microbial infection and possibly in the venom, as an antifibrinolytic agent. The recombinant form inhibits trypsin (IC(50)=80.02 nM, Ki=127.25 nM), chymotrypsin (IC(50)=393.78 nM, Ki=432.59 nM), the microbial serine proteases subtilisin A (IC(50)=379.20 nM, Ki=492.77 nM) and proteinase K (IC(50)=189.43 nM, Ki=271.76 nM), plasmin (IC(50)=457.98 nM, Ki=502.91 nM), human elastase (IC(50)=347.81 nM, Ki=469.90 nM) and porcine elastase (IC(50)=94.70 nM, Ki=125.62 nM). Does not inhibit thrombin. Binds to human plasmin and inhibits the plasmin-mediated degradation of fibrin to fibrin degradation products, indicating its role as an anti-fibrinolytic agent. Also binds to bacterial and fungal surfaces. Exhibits antimicrobial activity against the Gram-positive bacteria B.thuringiensis (MIC=4.21 uM) and P.larvae (MIC=11.13 uM), the Gram-negative bacteria E.coli (MIC=6.50 uM) and the multidrug-resistant A.baumannii (MIC=5 ug/ml, MBC=10 ug/ml), as well as against the fungus B.bassiana (IC(50)=2.57 uM). The synthetic peptide also exhibits antimicrobial activity against the Gram-positive bacterium P.larvae (MIC=41.12 uM), the Gram-negative bacterium P.aeruginosa (MIC=65.75 uM), and the fungus B.bassiana (IC(50)=44.27 uM). Is also able to prevent A.baumannii biofilm formation and eliminate established A.baumannii biofilms. In vitro, does not induce an inflammatory response and has no cytotoxic activity against mammalian cells. The protein is Secapin of Apis cerana (Indian honeybee).